The sequence spans 377 residues: UPF0754 membrane protein GTNG_0550 (377 aa).

2 consecutive transmembrane segments (helical) span residues 7-27 (LLFM…IAIV) and 357-377 (YLGA…GLWL).

It belongs to the UPF0754 family.

It is found in the cell membrane. The chain is UPF0754 membrane protein GTNG_0550 from Geobacillus thermodenitrificans (strain NG80-2).